The following is a 141-amino-acid chain: ATP synthase epsilon chain (141 aa).

It belongs to the ATPase epsilon chain family. In terms of assembly, F-type ATPases have 2 components, CF(1) - the catalytic core - and CF(0) - the membrane proton channel. CF(1) has five subunits: alpha(3), beta(3), gamma(1), delta(1), epsilon(1). CF(0) has three main subunits: a, b and c.

It is found in the cell inner membrane. In terms of biological role, produces ATP from ADP in the presence of a proton gradient across the membrane. This is ATP synthase epsilon chain from Chromohalobacter salexigens (strain ATCC BAA-138 / DSM 3043 / CIP 106854 / NCIMB 13768 / 1H11).